The chain runs to 544 residues: Probable protein kinase UbiB (544 aa).

Positions 123 to 501 (DFDIEPLASA…KRQQATGKFL (379 aa)) constitute a Protein kinase domain. ATP is bound by residues 129–137 (LASASIAQV) and lysine 152. Aspartate 287 (proton acceptor) is an active-site residue. A helical transmembrane segment spans residues 500–520 (FLFGVGATLVVCSAILVSSPY).

Belongs to the ABC1 family. UbiB subfamily.

It localises to the cell inner membrane. It participates in cofactor biosynthesis; ubiquinone biosynthesis [regulation]. Functionally, is probably a protein kinase regulator of UbiI activity which is involved in aerobic coenzyme Q (ubiquinone) biosynthesis. This is Probable protein kinase UbiB from Vibrio atlanticus (strain LGP32) (Vibrio splendidus (strain Mel32)).